The following is a 451-amino-acid chain: Histidinol dehydrogenase (451 aa).

The interval 1–20 (MLNVTDLRGHTPSKSDIRRA) is disordered. The segment covering 7 to 19 (LRGHTPSKSDIRR) has biased composition (basic and acidic residues). NAD(+) contacts are provided by Tyr129, Gln193, and Asn218. Residues Thr241, Gln263, and His266 each coordinate substrate. Positions 263 and 266 each coordinate Zn(2+). Catalysis depends on proton acceptor residues Glu332 and His333. Residues His333, Asp366, Glu420, and His425 each coordinate substrate. Asp366 is a Zn(2+) binding site. His425 lines the Zn(2+) pocket.

Belongs to the histidinol dehydrogenase family. Zn(2+) serves as cofactor.

The catalysed reaction is L-histidinol + 2 NAD(+) + H2O = L-histidine + 2 NADH + 3 H(+). It participates in amino-acid biosynthesis; L-histidine biosynthesis; L-histidine from 5-phospho-alpha-D-ribose 1-diphosphate: step 9/9. Functionally, catalyzes the sequential NAD-dependent oxidations of L-histidinol to L-histidinaldehyde and then to L-histidine. The polypeptide is Histidinol dehydrogenase (Corynebacterium efficiens (strain DSM 44549 / YS-314 / AJ 12310 / JCM 11189 / NBRC 100395)).